A 291-amino-acid polypeptide reads, in one-letter code: Pyridoxal 5'-phosphate synthase subunit PdxS (291 aa).

Residue D23 coordinates D-ribose 5-phosphate. Residue K80 is the Schiff-base intermediate with D-ribose 5-phosphate of the active site. A D-ribose 5-phosphate-binding site is contributed by G152. A D-glyceraldehyde 3-phosphate-binding site is contributed by R164. Residues G213 and 234–235 (GS) each bind D-ribose 5-phosphate.

It belongs to the PdxS/SNZ family. In terms of assembly, in the presence of PdxT, forms a dodecamer of heterodimers.

It carries out the reaction aldehydo-D-ribose 5-phosphate + D-glyceraldehyde 3-phosphate + L-glutamine = pyridoxal 5'-phosphate + L-glutamate + phosphate + 3 H2O + H(+). It functions in the pathway cofactor biosynthesis; pyridoxal 5'-phosphate biosynthesis. Functionally, catalyzes the formation of pyridoxal 5'-phosphate from ribose 5-phosphate (RBP), glyceraldehyde 3-phosphate (G3P) and ammonia. The ammonia is provided by the PdxT subunit. Can also use ribulose 5-phosphate and dihydroxyacetone phosphate as substrates, resulting from enzyme-catalyzed isomerization of RBP and G3P, respectively. This is Pyridoxal 5'-phosphate synthase subunit PdxS from Clostridium acetobutylicum (strain ATCC 824 / DSM 792 / JCM 1419 / IAM 19013 / LMG 5710 / NBRC 13948 / NRRL B-527 / VKM B-1787 / 2291 / W).